Consider the following 543-residue polypeptide: Methionine--tRNA ligase (543 aa).

The 'HIGH' region motif lies at 13–23; that stretch reads PYANGPLHVGH. Residues cysteine 145, cysteine 148, cysteine 158, and cysteine 161 each contribute to the Zn(2+) site. The 'KMSKS' region signature appears at 334-338; sequence QFSKS. An ATP-binding site is contributed by lysine 337.

This sequence belongs to the class-I aminoacyl-tRNA synthetase family. MetG type 1 subfamily. Zn(2+) serves as cofactor.

The protein resides in the cytoplasm. The catalysed reaction is tRNA(Met) + L-methionine + ATP = L-methionyl-tRNA(Met) + AMP + diphosphate. In terms of biological role, is required not only for elongation of protein synthesis but also for the initiation of all mRNA translation through initiator tRNA(fMet) aminoacylation. The polypeptide is Methionine--tRNA ligase (Thermoplasma volcanium (strain ATCC 51530 / DSM 4299 / JCM 9571 / NBRC 15438 / GSS1)).